We begin with the raw amino-acid sequence, 217 residues long: UPF0502 protein KPK_3478 (217 aa).

The protein belongs to the UPF0502 family.

This chain is UPF0502 protein KPK_3478, found in Klebsiella pneumoniae (strain 342).